The primary structure comprises 214 residues: Thiamine-phosphate synthase (214 aa).

Residues 37 to 41 (QLRDK) and Asn-69 each bind 4-amino-2-methyl-5-(diphosphooxymethyl)pyrimidine. Residues Asp-70 and Asp-89 each contribute to the Mg(2+) site. Position 108 (Ser-108) interacts with 4-amino-2-methyl-5-(diphosphooxymethyl)pyrimidine. 134–136 (TDS) contributes to the 2-[(2R,5Z)-2-carboxy-4-methylthiazol-5(2H)-ylidene]ethyl phosphate binding site. Lys-137 lines the 4-amino-2-methyl-5-(diphosphooxymethyl)pyrimidine pocket. 2-[(2R,5Z)-2-carboxy-4-methylthiazol-5(2H)-ylidene]ethyl phosphate contacts are provided by residues Gly-167 and 187–188 (IS).

Belongs to the thiamine-phosphate synthase family. Requires Mg(2+) as cofactor.

The catalysed reaction is 2-[(2R,5Z)-2-carboxy-4-methylthiazol-5(2H)-ylidene]ethyl phosphate + 4-amino-2-methyl-5-(diphosphooxymethyl)pyrimidine + 2 H(+) = thiamine phosphate + CO2 + diphosphate. It carries out the reaction 2-(2-carboxy-4-methylthiazol-5-yl)ethyl phosphate + 4-amino-2-methyl-5-(diphosphooxymethyl)pyrimidine + 2 H(+) = thiamine phosphate + CO2 + diphosphate. The enzyme catalyses 4-methyl-5-(2-phosphooxyethyl)-thiazole + 4-amino-2-methyl-5-(diphosphooxymethyl)pyrimidine + H(+) = thiamine phosphate + diphosphate. Its pathway is cofactor biosynthesis; thiamine diphosphate biosynthesis; thiamine phosphate from 4-amino-2-methyl-5-diphosphomethylpyrimidine and 4-methyl-5-(2-phosphoethyl)-thiazole: step 1/1. Its function is as follows. Condenses 4-methyl-5-(beta-hydroxyethyl)thiazole monophosphate (THZ-P) and 2-methyl-4-amino-5-hydroxymethyl pyrimidine pyrophosphate (HMP-PP) to form thiamine monophosphate (TMP). The sequence is that of Thiamine-phosphate synthase from Natronomonas pharaonis (strain ATCC 35678 / DSM 2160 / CIP 103997 / JCM 8858 / NBRC 14720 / NCIMB 2260 / Gabara) (Halobacterium pharaonis).